A 145-amino-acid polypeptide reads, in one-letter code: Large ribosomal subunit protein uL15 (145 aa).

The segment at 20–39 (GRVGKHRKHPSGRGNAGGEH) is disordered.

Belongs to the universal ribosomal protein uL15 family.

The polypeptide is Large ribosomal subunit protein uL15 (RPL27A) (Trypanosoma brucei brucei).